A 570-amino-acid chain; its full sequence is Sulfite reductase [NADPH] hemoprotein beta-component (570 aa).

The [4Fe-4S] cluster site is built by Cys434, Cys440, Cys479, and Cys483. Cys483 is a siroheme binding site.

The protein belongs to the nitrite and sulfite reductase 4Fe-4S domain family. As to quaternary structure, alpha(8)-beta(8). The alpha component is a flavoprotein, the beta component is a hemoprotein. Siroheme serves as cofactor. Requires [4Fe-4S] cluster as cofactor.

It catalyses the reaction hydrogen sulfide + 3 NADP(+) + 3 H2O = sulfite + 3 NADPH + 4 H(+). It participates in sulfur metabolism; hydrogen sulfide biosynthesis; hydrogen sulfide from sulfite (NADPH route): step 1/1. Functionally, component of the sulfite reductase complex that catalyzes the 6-electron reduction of sulfite to sulfide. This is one of several activities required for the biosynthesis of L-cysteine from sulfate. The polypeptide is Sulfite reductase [NADPH] hemoprotein beta-component (Escherichia coli (strain ATCC 8739 / DSM 1576 / NBRC 3972 / NCIMB 8545 / WDCM 00012 / Crooks)).